The chain runs to 475 residues: Bifunctional protein HldE (475 aa).

Residues 1–318 (MKITLPEFEK…ANALYTEQET (318 aa)) form a ribokinase region. 195-198 (NMSE) serves as a coordination point for ATP. D264 is an active-site residue. Residues 344-475 (MTNGCFDILH…DIIKTIRERG (132 aa)) form a cytidylyltransferase region.

In the N-terminal section; belongs to the carbohydrate kinase PfkB family. This sequence in the C-terminal section; belongs to the cytidylyltransferase family. Homodimer.

It catalyses the reaction D-glycero-beta-D-manno-heptose 7-phosphate + ATP = D-glycero-beta-D-manno-heptose 1,7-bisphosphate + ADP + H(+). The catalysed reaction is D-glycero-beta-D-manno-heptose 1-phosphate + ATP + H(+) = ADP-D-glycero-beta-D-manno-heptose + diphosphate. It functions in the pathway nucleotide-sugar biosynthesis; ADP-L-glycero-beta-D-manno-heptose biosynthesis; ADP-L-glycero-beta-D-manno-heptose from D-glycero-beta-D-manno-heptose 7-phosphate: step 1/4. It participates in nucleotide-sugar biosynthesis; ADP-L-glycero-beta-D-manno-heptose biosynthesis; ADP-L-glycero-beta-D-manno-heptose from D-glycero-beta-D-manno-heptose 7-phosphate: step 3/4. Its function is as follows. Catalyzes the phosphorylation of D-glycero-D-manno-heptose 7-phosphate at the C-1 position to selectively form D-glycero-beta-D-manno-heptose-1,7-bisphosphate. Functionally, catalyzes the ADP transfer from ATP to D-glycero-beta-D-manno-heptose 1-phosphate, yielding ADP-D-glycero-beta-D-manno-heptose. This chain is Bifunctional protein HldE, found in Aeromonas hydrophila subsp. hydrophila (strain ATCC 7966 / DSM 30187 / BCRC 13018 / CCUG 14551 / JCM 1027 / KCTC 2358 / NCIMB 9240 / NCTC 8049).